The following is a 365-amino-acid chain: N5-carboxyaminoimidazole ribonucleotide synthase (365 aa).

ATP is bound by residues R102, K143, 148-154 (GYDGKGQ), 177-180 (EEYV), E185, and 256-257 (NE). Positions 106–286 (KLFYRQHNLP…QFEQHLRAII (181 aa)) constitute an ATP-grasp domain.

This sequence belongs to the PurK/PurT family. As to quaternary structure, homodimer.

The enzyme catalyses 5-amino-1-(5-phospho-beta-D-ribosyl)imidazole + hydrogencarbonate + ATP = 5-carboxyamino-1-(5-phospho-D-ribosyl)imidazole + ADP + phosphate + 2 H(+). Its pathway is purine metabolism; IMP biosynthesis via de novo pathway; 5-amino-1-(5-phospho-D-ribosyl)imidazole-4-carboxylate from 5-amino-1-(5-phospho-D-ribosyl)imidazole (N5-CAIR route): step 1/2. Catalyzes the ATP-dependent conversion of 5-aminoimidazole ribonucleotide (AIR) and HCO(3)(-) to N5-carboxyaminoimidazole ribonucleotide (N5-CAIR). This Saccharolobus solfataricus (strain ATCC 35092 / DSM 1617 / JCM 11322 / P2) (Sulfolobus solfataricus) protein is N5-carboxyaminoimidazole ribonucleotide synthase.